The chain runs to 431 residues: Protein translocase subunit SecY 1 (431 aa).

The next 10 membrane-spanning stretches (helical) occupy residues 18–38 (IYFT…TVPG), 67–87 (YSIF…IQLL), 115–135 (YLTL…FNAL), 150–170 (VEIA…GDEI), 178–198 (GVSV…LYQI), 215–235 (ILFF…VTWV), 268–288 (VIPV…LMAF), 312–332 (GVII…FVQV), 365–385 (LIKL…LPQL), and 392–412 (LPSS…VVLE).

The protein belongs to the SecY/SEC61-alpha family. As to quaternary structure, component of the Sec protein translocase complex. Heterotrimer consisting of SecY, SecE and SecG subunits. The heterotrimers can form oligomers, although 1 heterotrimer is thought to be able to translocate proteins. Interacts with the ribosome. Interacts with SecDF, and other proteins may be involved. Interacts with SecA.

Its subcellular location is the cell membrane. Its function is as follows. The central subunit of the protein translocation channel SecYEG. Consists of two halves formed by TMs 1-5 and 6-10. These two domains form a lateral gate at the front which open onto the bilayer between TMs 2 and 7, and are clamped together by SecE at the back. The channel is closed by both a pore ring composed of hydrophobic SecY resides and a short helix (helix 2A) on the extracellular side of the membrane which forms a plug. The plug probably moves laterally to allow the channel to open. The ring and the pore may move independently. In Lactobacillus kefiranofaciens subsp. kefiranofaciens, this protein is Protein translocase subunit SecY 1.